A 171-amino-acid polypeptide reads, in one-letter code: ATP synthase subunit b (171 aa).

Residues 24–44 form a helical membrane-spanning segment; sequence INLVIVIGVLYWFLKGFLGGI.

Belongs to the ATPase B chain family. In terms of assembly, F-type ATPases have 2 components, F(1) - the catalytic core - and F(0) - the membrane proton channel. F(1) has five subunits: alpha(3), beta(3), gamma(1), delta(1), epsilon(1). F(0) has four main subunits: a(1), b(1), b'(1) and c(10-14). The alpha and beta chains form an alternating ring which encloses part of the gamma chain. F(1) is attached to F(0) by a central stalk formed by the gamma and epsilon chains, while a peripheral stalk is formed by the delta, b and b' chains.

The protein resides in the cellular thylakoid membrane. Its function is as follows. F(1)F(0) ATP synthase produces ATP from ADP in the presence of a proton or sodium gradient. F-type ATPases consist of two structural domains, F(1) containing the extramembraneous catalytic core and F(0) containing the membrane proton channel, linked together by a central stalk and a peripheral stalk. During catalysis, ATP synthesis in the catalytic domain of F(1) is coupled via a rotary mechanism of the central stalk subunits to proton translocation. Component of the F(0) channel, it forms part of the peripheral stalk, linking F(1) to F(0). This is ATP synthase subunit b from Synechococcus sp. (strain WH7803).